We begin with the raw amino-acid sequence, 361 residues long: MSKSKFTKIIVVICIAAMFITGTSILSFAEDGTVQQSNVQIVRFDADSYNITPNQSVTISWKVLNADKVEITNMAGQGLSHEGSLEVWLMETTTFTLKAYDANGEVTSRSITVNLEHLEIKKFTVSRNEISAGETVELSWDVSGATDVSIPELTEKDLPTFESIQIQPLKTTTYTLTAYGLDGGVVKGEVTVKVNEPEITDFSADKYELDPGDSATLSWNAPGFQTIKIVGLEDEGHLPLTGTLKVSPQQTTTYTLEATTYDGIVKSKQITVKVKKPVITSFTVDKPSITKGEMFKLSWTSEYADHCYLTTNYGNKLLNRQPNGGITVASSRDITFELTAVDKYGNEVKSKIEIKVSTGVN.

The first 28 residues, 1–28 (MSKSKFTKIIVVICIAAMFITGTSILSF), serve as a signal peptide directing secretion.

This is an uncharacterized protein from Ruminiclostridium cellulolyticum (strain ATCC 35319 / DSM 5812 / JCM 6584 / H10) (Clostridium cellulolyticum).